The sequence spans 229 residues: Large ribosomal subunit protein uL1 (229 aa).

It belongs to the universal ribosomal protein uL1 family. As to quaternary structure, part of the 50S ribosomal subunit.

In terms of biological role, binds directly to 23S rRNA. The L1 stalk is quite mobile in the ribosome, and is involved in E site tRNA release. Functionally, protein L1 is also a translational repressor protein, it controls the translation of the L11 operon by binding to its mRNA. This chain is Large ribosomal subunit protein uL1, found in Rhodopseudomonas palustris (strain HaA2).